The following is a 369-amino-acid chain: tRNA/tmRNA (uracil-C(5))-methyltransferase (369 aa).

5 residues coordinate S-adenosyl-L-methionine: Gln190, Tyr218, Asn223, Glu239, and Asp301. Cys326 functions as the Nucleophile in the catalytic mechanism. The active-site Proton acceptor is Glu360.

It belongs to the class I-like SAM-binding methyltransferase superfamily. RNA M5U methyltransferase family. TrmA subfamily.

The enzyme catalyses uridine(54) in tRNA + S-adenosyl-L-methionine = 5-methyluridine(54) in tRNA + S-adenosyl-L-homocysteine + H(+). The catalysed reaction is uridine(341) in tmRNA + S-adenosyl-L-methionine = 5-methyluridine(341) in tmRNA + S-adenosyl-L-homocysteine + H(+). Functionally, dual-specificity methyltransferase that catalyzes the formation of 5-methyluridine at position 54 (m5U54) in all tRNAs, and that of position 341 (m5U341) in tmRNA (transfer-mRNA). The polypeptide is tRNA/tmRNA (uracil-C(5))-methyltransferase (Vibrio atlanticus (strain LGP32) (Vibrio splendidus (strain Mel32))).